The chain runs to 95 residues: Acylphosphatase (95 aa).

In terms of domain architecture, Acylphosphatase-like spans 7-95 (RLTAWVLGTV…PKGEVGFRTR (89 aa)). Residues arginine 22 and asparagine 40 contribute to the active site.

Belongs to the acylphosphatase family.

It carries out the reaction an acyl phosphate + H2O = a carboxylate + phosphate + H(+). This chain is Acylphosphatase (acyP), found in Corynebacterium diphtheriae (strain ATCC 700971 / NCTC 13129 / Biotype gravis).